Consider the following 81-residue polypeptide: Toxin TdNa10 (81 aa).

Positions 1-20 (MWTFAIVLAFLLIGLDEGEA) are cleaved as a signal peptide. The 61-residue stretch at 21–81 (LDGYPLSKNN…KMYPGELPCH (61 aa)) folds into the LCN-type CS-alpha/beta domain. Disulfide bonds link cysteine 32–cysteine 80, cysteine 36–cysteine 57, cysteine 42–cysteine 62, and cysteine 46–cysteine 64.

It belongs to the long (4 C-C) scorpion toxin superfamily. Sodium channel inhibitor family. Beta subfamily. In terms of tissue distribution, expressed by the venom gland.

The protein localises to the secreted. Functionally, alpha toxins bind voltage-independently at site-3 of sodium channels (Nav) and inhibit the inactivation of the activated channels, thereby blocking neuronal transmission. This toxin binds, in vitro, to sodium channels and inhibits the inactivation of the activated channels. Seems not toxic to mice, crickets and sweet-water shrimps. The chain is Toxin TdNa10 from Tityus discrepans (Venezuelan scorpion).